Reading from the N-terminus, the 134-residue chain is GSH-induced LITAF domain protein (134 aa).

In terms of domain architecture, LITAF spans 33–113 (DPLGAPIQQT…CGNKVADFEK (81 aa)). Zn(2+)-binding residues include cysteine 53 and cysteine 56. The membrane-binding amphipathic helix stretch occupies residues 68–88 (PGVAAVVACMMPFMLGFCFLC). 2 residues coordinate Zn(2+): cysteine 101 and cysteine 104.

Belongs to the CDIP1/LITAF family. Interacts (via N- and C-terminal) with MIEL1 and LSD1 (via N-terminus).

Its subcellular location is the cell membrane. Acts as a membrane anchor, bringing other regulators of programmed cell death (PCD) to the plasma membrane. Negatively regulates hypersensitive cell death. This Arabidopsis thaliana (Mouse-ear cress) protein is GSH-induced LITAF domain protein.